The sequence spans 298 residues: MMPIPVNPTNASIQPQSLYDAWADLAWRAMLTEVNLSPKPGLVDRLNCGAHKDMALADFHRSAEAIRHWLPRFMEYGASCTRLPPESVLAGLRPLGMACEAAMFRATAGVNTHKGSIFSLGLLCAAIGRLYQLRQPIAAETLCATAADFCRGLTTRELRQNNLQLTAGQRLYQQLGLTGARGEAEAGYPLVIRHALPHYRALLAQGRDPELALLDTLLLLMSLNGDTNVASRGGADGLRWLQQQAAVLLHQGGIRTPDDLVYLHRFDQQCIERNLSPGGSADLLIVTWFLAQISQVNH.

This sequence belongs to the CitG/MdcB family.

It carries out the reaction 3'-dephospho-CoA + ATP = 2'-(5''-triphospho-alpha-D-ribosyl)-3'-dephospho-CoA + adenine. The protein is Probable 2-(5''-triphosphoribosyl)-3'-dephosphocoenzyme-A synthase 2 of Salmonella typhi.